The chain runs to 369 residues: FAD-dependent monooxygenase FPY4 (369 aa).

Belongs to the aromatic-ring hydroxylase family. FAD is required as a cofactor.

Its pathway is secondary metabolite biosynthesis. FAD-dependent monooxygenase; part of the gene cluster that mediates the biosynthesis of the gamma-pyrones fusapyrone (FPY) and deoxyfusapyrone (dFPY). FPY is an undecaketide and thus likely synthesized by the polyketide synthase FPY1 from acetyl-CoA functioning as starter unit and the addition of 10 malonyl-CoA extender units by successive Claisen-condensations. Next to this, FPY shares some rare features: C-glycosylated 4-deoxyglucose at C-3, a gem-dimethyl group at C-13, and an alpha-beta to beta-gamma double bond shift at C-20. During FPY biosynthesis mono-C-methyl groups are transferred to the tetra-, penta-, hexa- and heptaketide, while two C-methyl groups are transferred to the nonaketide, suggesting that the CMet domain is programmed to selectively catalyze two successive C-alpha-methylation reactions of the nonaketide, while other alpha-carbons are non- or mono-methylated only. While the origin of the 4'-deoxyglucose moiety remains opaque, its transfer to C-3 is most likely mediated by the C-glycosyltransferase FPY2. Next to this, the hydroxyl group present at C-33 and discriminating between FPY and dFPY, is likely to be installed by the cytochrome P450 monooxygenase FPY7. No putative function can be predicted for the remaining genes FPY3-FPY6. This is FAD-dependent monooxygenase FPY4 from Fusarium mangiferae (Mango malformation disease fungus).